The chain runs to 301 residues: Protein FdhE homolog (301 aa).

The protein belongs to the FdhE family.

The protein localises to the cytoplasm. Its function is as follows. Necessary for formate dehydrogenase activity. The chain is Protein FdhE homolog from Erwinia tasmaniensis (strain DSM 17950 / CFBP 7177 / CIP 109463 / NCPPB 4357 / Et1/99).